Reading from the N-terminus, the 291-residue chain is 33 kDa chaperonin (291 aa).

2 disulfides stabilise this stretch: Cys-229-Cys-231 and Cys-262-Cys-265.

Belongs to the HSP33 family. Post-translationally, under oxidizing conditions two disulfide bonds are formed involving the reactive cysteines. Under reducing conditions zinc is bound to the reactive cysteines and the protein is inactive.

The protein resides in the cytoplasm. Redox regulated molecular chaperone. Protects both thermally unfolding and oxidatively damaged proteins from irreversible aggregation. Plays an important role in the bacterial defense system toward oxidative stress. The sequence is that of 33 kDa chaperonin from Aliivibrio salmonicida (strain LFI1238) (Vibrio salmonicida (strain LFI1238)).